A 1243-amino-acid chain; its full sequence is Tau-tubulin kinase 2 (1243 aa).

A Protein kinase domain is found at 21–284 (WKVLRKIGGG…LLTSVFDNSI (264 aa)). ATP-binding positions include 27 to 35 (IGGGGFGEI) and Lys-50. Asp-141 (proton acceptor) is an active-site residue. The residue at position 445 (Ser-445) is a Phosphoserine. Over residues 674–683 (VASTQSTSGS) the composition is skewed to polar residues. Disordered regions lie at residues 674 to 695 (VAST…KKDL) and 737 to 761 (TGHD…DPPD). Position 786 is a phosphoserine (Ser-786). The segment at 1063–1086 (QINGSASPQFLPRPPPGKPPVRPG) is disordered. Pro residues predominate over residues 1073-1084 (LPRPPPGKPPVR). Ser-1102 carries the phosphoserine modification. Over residues 1115-1129 (QNGSQKSRSTTQCKS) the composition is skewed to polar residues. Residues 1115 to 1243 (QNGSQKSRST…KSKPASKLSR (129 aa)) are disordered. 3 stretches are compositionally biased toward low complexity: residues 1144–1170 (VVPR…PSRA), 1187–1202 (SKSP…SRRS), and 1227–1243 (SSKT…KLSR).

The protein belongs to the protein kinase superfamily. CK1 Ser/Thr protein kinase family. In terms of assembly, interacts with CEP164. Interacts with MCRS1; the interaction is required for recruitment of TTBK2 to the mother centriole.

It localises to the cell projection. The protein resides in the cilium. The protein localises to the cytoplasm. Its subcellular location is the cytoskeleton. It is found in the cilium basal body. It localises to the microtubule organizing center. The protein resides in the centrosome. The protein localises to the centriole. Its subcellular location is the cytosol. It is found in the nucleus. The catalysed reaction is L-seryl-[protein] + ATP = O-phospho-L-seryl-[protein] + ADP + H(+). It carries out the reaction L-threonyl-[protein] + ATP = O-phospho-L-threonyl-[protein] + ADP + H(+). Its function is as follows. Serine/threonine kinase that acts as a key regulator of ciliogenesis: controls the initiation of ciliogenesis by binding to the distal end of the basal body and promoting the removal of CCP110, which caps the mother centriole, leading to the recruitment of IFT proteins, which build the ciliary axoneme. Has some substrate preference for proteins that are already phosphorylated on a Tyr residue at the +2 position relative to the phosphorylation site. Able to phosphorylate tau on serines in vitro. Phosphorylates MPHOSPH9 which promotes its ubiquitination and proteasomal degradation, loss of MPHOSPH9 facilitates the removal of the CP110-CEP97 complex (a negative regulator of ciliogenesis) from the mother centrioles, promoting the initiation of ciliogenesis. Required for recruitment of CPLANE2 and INTU to the mother centriole. The sequence is that of Tau-tubulin kinase 2 (Ttbk2) from Mus musculus (Mouse).